The following is a 794-amino-acid chain: Zinc finger protein 148 (794 aa).

Residue K6 forms a Glycyl lysine isopeptide (Lys-Gly) (interchain with G-Cter in SUMO2) linkage. A Phosphoserine modification is found at S51. Glycyl lysine isopeptide (Lys-Gly) (interchain with G-Cter in SUMO2) cross-links involve residues K88, K115, and K132. Residues 171–193 form a C2H2-type 1 zinc finger; it reads HVCEHCNAAFRTNYHLQRHVFIH. Position 194 is a phosphothreonine (T194). 2 consecutive C2H2-type zinc fingers follow at residues 199–221 and 227–249; these read FQCS…EKIH and FRCD…KRTH. The residue at position 250 (S250) is a Phosphoserine. A C2H2-type 4 zinc finger spans residues 255 to 278; sequence YQCEYCLQYFSRTDRVLKHKRMCH. K291 participates in a covalent cross-link: Glycyl lysine isopeptide (Lys-Gly) (interchain with G-Cter in SUMO2). Residues 298-336 form a disordered region; the sequence is EEDSGFSTSPKDNSLPKKKRQKTEKKSSGMDKESVLDKS. A phosphoserine mark is found at S301 and S306. Residue K308 forms a Glycyl lysine isopeptide (Lys-Gly) (interchain with G-Cter in SUMO2) linkage. A compositionally biased stretch (basic and acidic residues) spans 321-336; sequence EKKSSGMDKESVLDKS. K356 is covalently cross-linked (Glycyl lysine isopeptide (Lys-Gly) (interchain with G-Cter in SUMO1); alternate). A Glycyl lysine isopeptide (Lys-Gly) (interchain with G-Cter in SUMO2); alternate cross-link involves residue K356. K402 participates in a covalent cross-link: Glycyl lysine isopeptide (Lys-Gly) (interchain with G-Cter in SUMO2). S412 carries the phosphoserine modification. Glycyl lysine isopeptide (Lys-Gly) (interchain with G-Cter in SUMO2) cross-links involve residues K421 and K424. The span at 574–588 shows a compositional bias: polar residues; it reads NSSDVPEVTQSENVG. The segment at 574–599 is disordered; it reads NSSDVPEVTQSENVGSSSQASSSDKA. Residue K607 is modified to N6-acetyllysine. Residues S665 and S784 each carry the phosphoserine modification.

The protein belongs to the krueppel C2H2-type zinc-finger protein family. In terms of assembly, interacts with HNRNPDL. Interacts with the 5FMC complex; the interaction requires association with CHTOP. Interacts with CAVIN1. Sumoylated with SUMO2. Desumoylated by SENP3, resulting in the stimulation of transcription of its target genes. Strong expression detected in brain, lung, liver and kidney, with lower levels detected in spleen, skeletal muscle, testis and heart.

It is found in the nucleus. Its function is as follows. Involved in transcriptional regulation. Represses the transcription of a number of genes including gastrin, stromelysin and enolase. Binds to the G-rich box in the enhancer region of these genes. In Mus musculus (Mouse), this protein is Zinc finger protein 148 (Znf148).